The following is a 346-amino-acid chain: Protein Rae1 (346 aa).

4 WD repeats span residues A17–P61, M64–V105, L126–T148, and V255–S289.

Belongs to the WD repeat rae1 family. In terms of assembly, interacts with hiw; the interaction with Rae1 may protect hiw from autophagy-mediated degradation. Interacts with Nup98-96. As to expression, head (at protein level).

The protein localises to the cytoplasm. It is found in the perinuclear region. The protein resides in the nucleus. It localises to the nucleus envelope. Its subcellular location is the chromosome. Its function is as follows. Probable component of the nuclear pore complex (NPC) which regulates the nuclear export of specific mRNAs and promotes cell cycle progression during mitosis and male meiosis. Acts with Nup98-96 to promote the nuclear export of specific mRNAs such as Moe, however it does not appear to be required for general nuclear mRNA transport. Essential mitotic and male meiotic cell cycle regulator with roles in many aspects of the cell cycle including chromatin organization and condensation, spindle assembly, chromosome segregation, and maintaining nuclear structure. During male meiosis it is required for completion of meiosis I, as well as accurate cytokinesis of the secondary spermatocytes, and postmeiotic differentiation of spermatids. Acts as a downstream regulatory target of the Hippo/SWH (Sav/Wts/Hpo) signaling pathway to promote mitotic cell cycle progression and proliferation during wing and eye development, and thereby plays a key role in integrating the regulation of proliferation with organ size control. When the Hippo/SWH signaling pathway is inactive, Rae1 acts independently of yki to increase organ size by promoting mitotic S-phase entry and increase cellular proliferation. When the Hippo/SWH signaling pathway is active it inhibits the activity of Rae1 in a Wts-dependent manner to restrict organ growth. However, Rae1 is also able to negatively regulate the levels and activity of yki likely by activating the core kinases of the Hippo/SWH signaling pathway hpo and Wts and increasing the protein levels of hpo, Mer and Wts; it is therefore likely that it functions as part of a negative feedback loop with the Hippo/SWH signaling pathway to regulate pathway homeostasis and prevent organ overgrowth. Promotes mitotic cell cycle progression, at least in part, by increasing the accumulation of mitotic cyclins such as CycB, possibly by directly up-regulating cyclin transcripts or by inhibiting the anaphase promoting complex/cyclosome (APC/C) activator fzy. Also required in presynaptic, postmitotic motor neurons to restrain synaptic terminal growth. Promotes the expression and stability of the an E3 ubiquitin ligase of hiw, and is likely to function in the regulation of synaptic growth by binding to hiw and protecting it from autophagy-mediated degradation. This chain is Protein Rae1, found in Drosophila melanogaster (Fruit fly).